The following is an 87-amino-acid chain: Small ribosomal subunit protein uS15c (87 aa).

Belongs to the universal ribosomal protein uS15 family. As to quaternary structure, part of the 30S ribosomal subunit.

The protein localises to the plastid. It is found in the chloroplast. This is Small ribosomal subunit protein uS15c (rps15) from Solanum lycopersicum (Tomato).